The chain runs to 412 residues: Aspartate aminotransferase, cytoplasmic (412 aa).

A2 is modified (N-acetylalanine). Residues G38, W140, and N194 each coordinate L-aspartate. K258 is subject to N6-(pyridoxal phosphate)lysine. L-aspartate is bound at residue R386.

Belongs to the class-I pyridoxal-phosphate-dependent aminotransferase family. Homodimer. Requires pyridoxal 5'-phosphate as cofactor.

The protein resides in the cytoplasm. It catalyses the reaction L-aspartate + 2-oxoglutarate = oxaloacetate + L-glutamate. It carries out the reaction L-cysteine + 2-oxoglutarate = 2-oxo-3-sulfanylpropanoate + L-glutamate. The enzyme catalyses (2S)-2-aminobutanoate + 2-oxoglutarate = 2-oxobutanoate + L-glutamate. The catalysed reaction is 3-sulfino-L-alanine + 2-oxoglutarate = 3-sulfinopyruvate + L-glutamate. In terms of biological role, biosynthesis of L-glutamate from L-aspartate or L-cysteine. Important regulator of levels of glutamate, the major excitatory neurotransmitter of the vertebrate central nervous system. Acts as a scavenger of glutamate in brain neuroprotection. The aspartate aminotransferase activity is involved in hepatic glucose synthesis during development and in adipocyte glyceroneogenesis. Using L-cysteine as substrate, regulates levels of mercaptopyruvate, an important source of hydrogen sulfide. Mercaptopyruvate is converted into H(2)S via the action of 3-mercaptopyruvate sulfurtransferase (3MST). Hydrogen sulfide is an important synaptic modulator and neuroprotectant in the brain. The protein is Aspartate aminotransferase, cytoplasmic of Gallus gallus (Chicken).